The chain runs to 360 residues: Mannose-1-phosphate guanylyltransferase catalytic subunit beta (360 aa).

The interval 2-222 (KALILVGGYG…QGFWMDIGQP (221 aa)) is substrate-binding domain. Asp-110 is a GDP-alpha-D-mannose binding site. Asp-110 lines the Mg(2+) pocket. Lys-162 is a catalytic residue. GDP-alpha-D-mannose is bound at residue Asp-218. Residues 245–360 (YSGPGIVGNV…ESVPEPRIIM (116 aa)) form a hexapeptide repeat domain region.

The protein belongs to the transferase hexapeptide repeat family. In terms of assembly, component of the GMPPA-GMPPB mannose-1-phosphate guanylyltransferase complex composed of 4 GMPPA subunits and 8 GMPPB subunits; the complex is organized into three layers, a central layer made up of 2 GMPPA dimers sandwiched between two layers each made up of 2 GMPPB dimers. GMPPB catalytic activity is reduced when part of the complex and binding of GDP-alpha-D-Mannose by GMPPA induces allosteric feedback inhibition of GMPPB. Mg(2+) serves as cofactor.

The protein localises to the cytoplasm. It catalyses the reaction alpha-D-mannose 1-phosphate + GTP + H(+) = GDP-alpha-D-mannose + diphosphate. It functions in the pathway nucleotide-sugar biosynthesis; GDP-alpha-D-mannose biosynthesis; GDP-alpha-D-mannose from alpha-D-mannose 1-phosphate (GTP route): step 1/1. Its activity is regulated as follows. Enzyme activity is reduced by incorporation into the GMPPA-GMPPB mannose-1-phosphate guanylyltransferase complex. Allosterically inhibited, when part of the GMPPA-GMPPB complex, by GDP-alpha-D-mannose binding to GMPPA. Catalytic subunit of the GMPPA-GMPPB mannose-1-phosphate guanylyltransferase complex. Catalyzes the formation of GDP-mannose, an essential precursor of glycan moieties of glycoproteins and glycolipids. Can catalyze the reverse reaction in vitro. Together with GMPPA regulates GDP-alpha-D-mannose levels. The chain is Mannose-1-phosphate guanylyltransferase catalytic subunit beta from Mus musculus (Mouse).